The chain runs to 215 residues: Cytochrome b6 (215 aa).

The chain crosses the membrane as a helical span at residues 32–52 (IFYCFGGITLTCFLIQVATGF). C35 serves as a coordination point for heme c. Residues H86 and H100 each contribute to the heme b site. 3 helical membrane-spanning segments follow: residues 90–110 (ASMM…TGGF), 116–136 (LTWV…VTGY), and 186–206 (LHTF…FLMI). 2 residues coordinate heme b: H187 and H202.

Belongs to the cytochrome b family. PetB subfamily. As to quaternary structure, the 4 large subunits of the cytochrome b6-f complex are cytochrome b6, subunit IV (17 kDa polypeptide, PetD), cytochrome f and the Rieske protein, while the 4 small subunits are PetG, PetL, PetM and PetN. The complex functions as a dimer. It depends on heme b as a cofactor. Heme c serves as cofactor.

It is found in the plastid. The protein resides in the chloroplast thylakoid membrane. In terms of biological role, component of the cytochrome b6-f complex, which mediates electron transfer between photosystem II (PSII) and photosystem I (PSI), cyclic electron flow around PSI, and state transitions. This Nephroselmis olivacea (Green alga) protein is Cytochrome b6.